We begin with the raw amino-acid sequence, 419 residues long: Histidine--tRNA ligase (419 aa).

The protein belongs to the class-II aminoacyl-tRNA synthetase family.

The protein localises to the cytoplasm. It catalyses the reaction tRNA(His) + L-histidine + ATP = L-histidyl-tRNA(His) + AMP + diphosphate + H(+). This Pyrobaculum aerophilum (strain ATCC 51768 / DSM 7523 / JCM 9630 / CIP 104966 / NBRC 100827 / IM2) protein is Histidine--tRNA ligase.